A 72-amino-acid chain; its full sequence is Disintegrin basilicin (72 aa).

The region spanning 1–72 (AGEECDCGSP…ADCPRNHFHA (72 aa)) is the Disintegrin domain. Intrachain disulfides connect Cys-5–Cys-20, Cys-7–Cys-15, Cys-14–Cys-37, Cys-28–Cys-34, Cys-33–Cys-58, and Cys-46–Cys-65. The Cell attachment site signature appears at 50-52 (RGD).

The protein belongs to the venom metalloproteinase (M12B) family. P-II subfamily. P-IIa sub-subfamily. Monomer (disintegrin). As to expression, expressed by the venom gland.

It localises to the secreted. Functionally, inhibits fibrinogen interaction with platelets. Acts by binding to alpha-IIb/beta-3 (ITGA2B/ITGB3) on the platelet surface and inhibits aggregation induced by ADP, thrombin, platelet-activating factor and collagen. The sequence is that of Disintegrin basilicin from Crotalus basiliscus (Mexican west-coast rattlesnake).